A 155-amino-acid polypeptide reads, in one-letter code: 1,4-dihydroxy-2-naphthoyl-CoA hydrolase (155 aa).

Aspartate 27 is a catalytic residue.

The protein belongs to the 4-hydroxybenzoyl-CoA thioesterase family. DHNA-CoA hydrolase subfamily.

It catalyses the reaction 1,4-dihydroxy-2-naphthoyl-CoA + H2O = 1,4-dihydroxy-2-naphthoate + CoA + H(+). It functions in the pathway cofactor biosynthesis; phylloquinone biosynthesis. The protein operates within quinol/quinone metabolism; 1,4-dihydroxy-2-naphthoate biosynthesis; 1,4-dihydroxy-2-naphthoate from chorismate: step 7/7. Functionally, catalyzes the hydrolysis of 1,4-dihydroxy-2-naphthoyl-CoA (DHNA-CoA) to 1,4-dihydroxy-2-naphthoate (DHNA), a reaction involved in phylloquinone (vitamin K1) biosynthesis. This is 1,4-dihydroxy-2-naphthoyl-CoA hydrolase from Prochlorococcus marinus (strain NATL2A).